We begin with the raw amino-acid sequence, 523 residues long: 2-isopropylmalate synthase (523 aa).

The Pyruvate carboxyltransferase domain maps to valine 5–tryptophan 267. Mn(2+)-binding residues include aspartate 14, histidine 202, histidine 204, and asparagine 238. Positions arginine 392–valine 523 are regulatory domain.

The protein belongs to the alpha-IPM synthase/homocitrate synthase family. LeuA type 1 subfamily. As to quaternary structure, homodimer. The cofactor is Mn(2+).

It is found in the cytoplasm. The catalysed reaction is 3-methyl-2-oxobutanoate + acetyl-CoA + H2O = (2S)-2-isopropylmalate + CoA + H(+). The protein operates within amino-acid biosynthesis; L-leucine biosynthesis; L-leucine from 3-methyl-2-oxobutanoate: step 1/4. Catalyzes the condensation of the acetyl group of acetyl-CoA with 3-methyl-2-oxobutanoate (2-ketoisovalerate) to form 3-carboxy-3-hydroxy-4-methylpentanoate (2-isopropylmalate). In Salmonella dublin (strain CT_02021853), this protein is 2-isopropylmalate synthase.